Reading from the N-terminus, the 385-residue chain is MKIHEYQAKALFRTFGVPVPDGGVAFSVEEAVDVARGLGGYPVVVKAQIHAGGRGKGGGVKLAASEEEARRFAGEILGMTLVTHQTGPQGREVKKLLVEAGQKIAKELYLSILVDRATAGIVIMASQEGGMDIETVAAKTPEKIIKVRVDPLTGIQGYYLRQVGFGLGLPKAALKEFSALLKNLYTLFVKNDCSLLEINPLILTSDDRVMALDAKVDIDSNALFRHKDLVELRDLDEEDPLEVEASKFNLNYINLDGNVGNIVNGAGLAMATMDIIKNAGAEPANFMDVGGGATAEMVENAFSIILRDKKVKAVLINIFGGILRCDVFAEGIVTAAKKSGITIPVVVRMEGTNVERGKEILAQSGLNLINAVNLKDAAEKVAAAI.

Positions 9 to 244 (KALFRTFGVP…LDEEDPLEVE (236 aa)) constitute an ATP-grasp domain. ATP-binding positions include K46, 53 to 55 (GRG), E99, Q102, and E107. Mg(2+)-binding residues include N199 and D213. Residues N264 and 321–323 (GIL) contribute to the substrate site.

This sequence belongs to the succinate/malate CoA ligase beta subunit family. In terms of assembly, heterotetramer of two alpha and two beta subunits. The cofactor is Mg(2+).

The enzyme catalyses succinate + ATP + CoA = succinyl-CoA + ADP + phosphate. It catalyses the reaction GTP + succinate + CoA = succinyl-CoA + GDP + phosphate. It functions in the pathway carbohydrate metabolism; tricarboxylic acid cycle; succinate from succinyl-CoA (ligase route): step 1/1. Its function is as follows. Succinyl-CoA synthetase functions in the citric acid cycle (TCA), coupling the hydrolysis of succinyl-CoA to the synthesis of either ATP or GTP and thus represents the only step of substrate-level phosphorylation in the TCA. The beta subunit provides nucleotide specificity of the enzyme and binds the substrate succinate, while the binding sites for coenzyme A and phosphate are found in the alpha subunit. The protein is Succinate--CoA ligase [ADP-forming] subunit beta of Desulforapulum autotrophicum (strain ATCC 43914 / DSM 3382 / VKM B-1955 / HRM2) (Desulfobacterium autotrophicum).